Reading from the N-terminus, the 134-residue chain is DNA-binding protein inhibitor ID-2 (134 aa).

Phosphoserine occurs at positions 14 and 25. The 53-residue stretch at 23 to 75 folds into the bHLH domain; the sequence is SRSKTPVDDPMSLLYNMNDCYSKLKELVPSIPQNKKVTKMEILQHVIDYILDL. Residues 30 to 83 form an interaction with IFI204 region; sequence DDPMSLLYNMNDCYSKLKELVPSIPQNKKVTKMEILQHVIDYILDLQIALDSHP. A Nuclear export signal motif is present at residues 106-115; it reads LNTDISILSL.

In terms of assembly, interacts with GATA4 and NKX2-5. Interacts with NR0B2. Interacts with CLOCK and BMAL1. Interacts with IFI204. Interacts with NEDD9/HEF1. Interacts with ASB4; this interaction promotes ID2 proteasomal degradation. In terms of processing, polyubiquitinated; which is favored by Ifi204 and leads to proteasomal degradation. Ubiquitinated in a ASB4-depedent manner, leading to proteasomal degradation. Post-translationally, phosphorylated in vitro by CDK1, PKA and PKC.

It is found in the cytoplasm. Its subcellular location is the nucleus. Functionally, transcriptional regulator (lacking a basic DNA binding domain) which negatively regulates the basic helix-loop-helix (bHLH) transcription factors by forming heterodimers and inhibiting their DNA binding and transcriptional activity. Implicated in regulating a variety of cellular processes, including cellular growth, senescence, differentiation, apoptosis, angiogenesis, and neoplastic transformation. Inhibits skeletal muscle and cardiac myocyte differentiation. Regulates the circadian clock by repressing the transcriptional activator activity of the CLOCK-BMAL1 heterodimer. Restricts the CLOCK and BMAL1 localization to the cytoplasm. Plays a role in both the input and output pathways of the circadian clock: in the input component, is involved in modulating the magnitude of photic entrainment and in the output component, contributes to the regulation of a variety of liver clock-controlled genes involved in lipid metabolism. In Mus musculus (Mouse), this protein is DNA-binding protein inhibitor ID-2 (Id2).